The sequence spans 112 residues: Nitrogenase-stabilizing/protective protein NifW (112 aa).

It belongs to the NifW family. In terms of assembly, homotrimer; associates with NifD.

Its function is as follows. May protect the nitrogenase Fe-Mo protein from oxidative damage. The chain is Nitrogenase-stabilizing/protective protein NifW from Rhodopseudomonas palustris (strain BisA53).